Here is a 482-residue protein sequence, read N- to C-terminus: MNGVEQTCASLRTQIAATEAKLADLKRELEIAEQAAASHKQNAADAEGGSERRWPLLDEEYRRYGRQMIVPQLGIQGQLKLRSAKVLIVGAGGLGCPAALYLAGAGVGTLGLVDGDAVESSNLHRQVLHRTRNIGKLKVDSAIEYLKELNPHSKYIAHREHLAPEAAPEIFSNYDLILDCTDNPATRYLISDTAVLLGKPLVSASALRTEGQLMVLNNPPRPAGDKTGGPCYRCVFPKPPPANTVTSCADGGIVGPVVGTMGVLQALEAIKVITADETTTPPPPSLHIFSAYSTPLFRTIKLRSRRPNCAVCSAEASVTVDTVRSGSTDYIFFCGTTGPENLLSPEERITPLEYRTRHHDKEEKEPTIIDVREKVQYDICSLENSINIPISTILASASSSMSNGDSLADGVPALPSWVPPDVASSQSTDPVYVVCRLGNDSQVAVKKLKELGLDQGGKRVVADIRGGFRAWKEQVDPEWPEY.

ATP is bound by residues Gly-93, Asp-114, 121 to 125 (SNLHR), Lys-138, and 182 to 183 (DN). Cys-231 and Cys-234 together coordinate Zn(2+). Cys-248 acts as the Glycyl thioester intermediate; for adenylyltransferase activity in catalysis. Zn(2+)-binding residues include Cys-309 and Cys-312. Positions 362–480 (EEKEPTIIDV…WKEQVDPEWP (119 aa)) constitute a Rhodanese domain. Catalysis depends on Cys-435, which acts as the Cysteine persulfide intermediate; for sulfurtransferase activity.

In the N-terminal section; belongs to the HesA/MoeB/ThiF family. UBA4 subfamily. The cofactor is Zn(2+).

The protein localises to the cytoplasm. It localises to the cytosol. It carries out the reaction [molybdopterin-synthase sulfur-carrier protein]-C-terminal Gly-Gly + ATP + H(+) = [molybdopterin-synthase sulfur-carrier protein]-C-terminal Gly-Gly-AMP + diphosphate. It catalyses the reaction [molybdopterin-synthase sulfur-carrier protein]-C-terminal Gly-Gly-AMP + S-sulfanyl-L-cysteinyl-[cysteine desulfurase] + AH2 = [molybdopterin-synthase sulfur-carrier protein]-C-terminal-Gly-aminoethanethioate + L-cysteinyl-[cysteine desulfurase] + A + AMP + 2 H(+). It participates in tRNA modification; 5-methoxycarbonylmethyl-2-thiouridine-tRNA biosynthesis. Its pathway is cofactor biosynthesis; molybdopterin biosynthesis. In terms of biological role, plays a central role in 2-thiolation of mcm(5)S(2)U at tRNA wobble positions of cytosolic tRNA(Lys), tRNA(Glu) and tRNA(Gln). Also essential during biosynthesis of the molybdenum cofactor. Acts by mediating the C-terminal thiocarboxylation of sulfur carriers urm1 and mocs2a. Its N-terminus first activates urm1 and mocs2a as acyl-adenylates (-COAMP), then the persulfide sulfur on the catalytic cysteine is transferred to urm1 and mocs2a to form thiocarboxylation (-COSH) of their C-terminus. The reaction probably involves hydrogen sulfide that is generated from the persulfide intermediate and that acts as a nucleophile towards urm1 and mocs2a. Subsequently, a transient disulfide bond is formed. Does not use thiosulfate as sulfur donor; nfs1 probably acting as a sulfur donor for thiocarboxylation reactions. This is Adenylyltransferase and sulfurtransferase uba4 from Aspergillus niger (strain ATCC MYA-4892 / CBS 513.88 / FGSC A1513).